Consider the following 137-residue polypeptide: Small ribosomal subunit protein uS12 (137 aa).

The disordered stretch occupies residues methionine 1–phenylalanine 28. Aspartate 102 carries the post-translational modification 3-methylthioaspartic acid.

This sequence belongs to the universal ribosomal protein uS12 family. Part of the 30S ribosomal subunit. Contacts proteins S8 and S17. May interact with IF1 in the 30S initiation complex.

With S4 and S5 plays an important role in translational accuracy. Functionally, interacts with and stabilizes bases of the 16S rRNA that are involved in tRNA selection in the A site and with the mRNA backbone. Located at the interface of the 30S and 50S subunits, it traverses the body of the 30S subunit contacting proteins on the other side and probably holding the rRNA structure together. The combined cluster of proteins S8, S12 and S17 appears to hold together the shoulder and platform of the 30S subunit. This is Small ribosomal subunit protein uS12 from Staphylococcus carnosus (strain TM300).